A 550-amino-acid polypeptide reads, in one-letter code: Chaperonin GroEL (550 aa).

ATP-binding positions include 30-33 (TLGP), lysine 51, 87-91 (DGTTT), glycine 415, and aspartate 496. Positions 528-550 (EGGDMPAMPPGGMGGMGGMGGMM) are disordered. Residues 538–550 (GGMGGMGGMGGMM) are compositionally biased toward gly residues.

Belongs to the chaperonin (HSP60) family. As to quaternary structure, forms a cylinder of 14 subunits composed of two heptameric rings stacked back-to-back. Interacts with the co-chaperonin GroES.

The protein localises to the cytoplasm. It carries out the reaction ATP + H2O + a folded polypeptide = ADP + phosphate + an unfolded polypeptide.. Together with its co-chaperonin GroES, plays an essential role in assisting protein folding. The GroEL-GroES system forms a nano-cage that allows encapsulation of the non-native substrate proteins and provides a physical environment optimized to promote and accelerate protein folding. This is Chaperonin GroEL from Chlorobium phaeobacteroides (strain BS1).